Here is a 344-residue protein sequence, read N- to C-terminus: Succinylglutamate desuccinylase (344 aa).

The Zn(2+) site is built by H63, E66, and H160. Residue E224 is part of the active site.

This sequence belongs to the AspA/AstE family. Succinylglutamate desuccinylase subfamily. Requires Zn(2+) as cofactor.

The catalysed reaction is N-succinyl-L-glutamate + H2O = L-glutamate + succinate. Its pathway is amino-acid degradation; L-arginine degradation via AST pathway; L-glutamate and succinate from L-arginine: step 5/5. Transforms N(2)-succinylglutamate into succinate and glutamate. This Shewanella putrefaciens (strain CN-32 / ATCC BAA-453) protein is Succinylglutamate desuccinylase.